Reading from the N-terminus, the 166-residue chain is Mitochondrial inner membrane protease subunit 1 (166 aa).

Active-site residues include Ser-40 and Lys-83.

Belongs to the peptidase S26 family. IMP1 subfamily. In terms of assembly, heterodimer of 2 subunits, IMMPL1 and IMMPL2.

The protein resides in the mitochondrion inner membrane. Functionally, catalyzes the removal of transit peptides required for the targeting of proteins from the mitochondrial matrix, across the inner membrane, into the inter-membrane space. Known to process the nuclear encoded protein DIABLO. The polypeptide is Mitochondrial inner membrane protease subunit 1 (IMMP1L) (Homo sapiens (Human)).